The sequence spans 492 residues: N-succinylglutamate 5-semialdehyde dehydrogenase (492 aa).

220-225 (GSAGTG) is an NAD(+) binding site. Catalysis depends on residues glutamate 243 and cysteine 277.

It belongs to the aldehyde dehydrogenase family. AstD subfamily.

It carries out the reaction N-succinyl-L-glutamate 5-semialdehyde + NAD(+) + H2O = N-succinyl-L-glutamate + NADH + 2 H(+). It functions in the pathway amino-acid degradation; L-arginine degradation via AST pathway; L-glutamate and succinate from L-arginine: step 4/5. Catalyzes the NAD-dependent reduction of succinylglutamate semialdehyde into succinylglutamate. The chain is N-succinylglutamate 5-semialdehyde dehydrogenase from Cronobacter sakazakii (strain ATCC BAA-894) (Enterobacter sakazakii).